The primary structure comprises 95 residues: uncharacterized protein (95 aa).

This is an uncharacterized protein from Enterobacteria phage T4 (Bacteriophage T4).